A 197-amino-acid polypeptide reads, in one-letter code: Imidazoleglycerol-phosphate dehydratase (197 aa).

Belongs to the imidazoleglycerol-phosphate dehydratase family.

The protein resides in the cytoplasm. It catalyses the reaction D-erythro-1-(imidazol-4-yl)glycerol 3-phosphate = 3-(imidazol-4-yl)-2-oxopropyl phosphate + H2O. It participates in amino-acid biosynthesis; L-histidine biosynthesis; L-histidine from 5-phospho-alpha-D-ribose 1-diphosphate: step 6/9. This chain is Imidazoleglycerol-phosphate dehydratase, found in Methylocella silvestris (strain DSM 15510 / CIP 108128 / LMG 27833 / NCIMB 13906 / BL2).